The primary structure comprises 236 residues: Ubiquinone biosynthesis O-methyltransferase (236 aa).

R39, G59, D80, and M124 together coordinate S-adenosyl-L-methionine.

This sequence belongs to the methyltransferase superfamily. UbiG/COQ3 family.

The enzyme catalyses a 3-demethylubiquinol + S-adenosyl-L-methionine = a ubiquinol + S-adenosyl-L-homocysteine + H(+). It carries out the reaction a 3-(all-trans-polyprenyl)benzene-1,2-diol + S-adenosyl-L-methionine = a 2-methoxy-6-(all-trans-polyprenyl)phenol + S-adenosyl-L-homocysteine + H(+). It functions in the pathway cofactor biosynthesis; ubiquinone biosynthesis. O-methyltransferase that catalyzes the 2 O-methylation steps in the ubiquinone biosynthetic pathway. In Shewanella halifaxensis (strain HAW-EB4), this protein is Ubiquinone biosynthesis O-methyltransferase.